Consider the following 346-residue polypeptide: Putative [LysW]-L-2-aminoadipate/[LysW]-L-glutamate phosphate reductase (346 aa).

Residue 12–15 (SGFT) coordinates NADP(+). C147 is a catalytic residue. Residue N310 participates in NADP(+) binding.

Belongs to the NAGSA dehydrogenase family. Type 1 subfamily. LysY sub-subfamily.

It is found in the cytoplasm. The catalysed reaction is [amino-group carrier protein]-C-terminal-N-(1-carboxy-5-oxopentan-1-yl)-L-glutamine + phosphate + NADP(+) = [amino-group carrier protein]-C-terminal-N-(1-carboxy-5-phosphooxy-5-oxopentan-1-yl)-L-glutamine + NADPH + H(+). It carries out the reaction [amino-group carrier protein]-C-terminal-gamma-(L-glutamyl-5-semialdehyde)-L-glutamate + phosphate + NADP(+) = [amino-group carrier protein]-C-terminal-gamma-(5-phospho-L-glutamyl)-L-glutamate + NADPH + H(+). It participates in amino-acid biosynthesis; L-lysine biosynthesis via AAA pathway; L-lysine from L-alpha-aminoadipate (Thermus route): step 3/5. It functions in the pathway amino-acid biosynthesis; L-arginine biosynthesis. Involved in both the arginine and lysine biosynthetic pathways. This Natronomonas pharaonis (strain ATCC 35678 / DSM 2160 / CIP 103997 / JCM 8858 / NBRC 14720 / NCIMB 2260 / Gabara) (Halobacterium pharaonis) protein is Putative [LysW]-L-2-aminoadipate/[LysW]-L-glutamate phosphate reductase.